Consider the following 148-residue polypeptide: Protein GLUTAMINE DUMPER 3 (148 aa).

The interval 1-24 (MEGRQYYPPRENVEGNRTTMGGGP) is disordered. Residues 1–34 (MEGRQYYPPRENVEGNRTTMGGGPHSPWHSPVPY) lie on the Extracellular side of the membrane. The helical transmembrane segment at 35–55 (LFGGLAAMLGLIAFALLILAC) threads the bilayer. Residues 56 to 148 (SYWRLSGYLD…RSSESNGETH (93 aa)) lie on the Cytoplasmic side of the membrane. The short motif at 99–103 (VIMAG) is the VIMAG element. The span at 120-132 (CDDDDDEDDDVEG) shows a compositional bias: acidic residues. Positions 120–148 (CDDDDDEDDDVEGSDQVVPRSSESNGETH) are disordered. Positions 138–148 (PRSSESNGETH) are enriched in polar residues.

It belongs to the GLUTAMINE DUMPER 1 (TC 9.B.60) family. In terms of tissue distribution, expressed in the vascular tissues. Also detected in anthers.

The protein localises to the membrane. In terms of biological role, probable subunit of an amino acid transporter involved in the regulation of the amino acid metabolism. Stimulates amino acid export by activating nonselective amino acid facilitators. Acts upstream genes involved in the salicylic acid (SA) pathway and in the geminivirus-host interaction. The chain is Protein GLUTAMINE DUMPER 3 (GDU3) from Arabidopsis thaliana (Mouse-ear cress).